Reading from the N-terminus, the 427-residue chain is UDP-N-acetyl-D-mannosamine dehydrogenase (427 aa).

NAD(+)-binding residues include Y19, I20, D39, R44, T91, and T130. 8 residues coordinate UDP-N-acetyl-alpha-D-mannosaminouronate: R155, V156, K207, N211, R214, H245, R247, and G258. K207 (proton donor/acceptor) is an active-site residue. C261 serves as the catalytic Nucleophile. 2 residues coordinate UDP-N-acetyl-alpha-D-mannosaminouronate: Y318 and K319. R326 is a binding site for NAD(+). K404 provides a ligand contact to UDP-N-acetyl-alpha-D-mannosaminouronate.

This sequence belongs to the UDP-glucose/GDP-mannose dehydrogenase family. In terms of assembly, homotetramer; probably dimer of dimers.

The enzyme catalyses UDP-N-acetyl-alpha-D-mannosamine + 2 NAD(+) + H2O = UDP-N-acetyl-alpha-D-mannosaminouronate + 2 NADH + 3 H(+). Functionally, catalyzes the four-electron oxidation of UDP-N-acetyl-D-mannosamine (UDP-ManNAc), reducing NAD(+) and releasing UDP-N-acetylmannosaminuronic acid (UDP-ManNAcA). The polypeptide is UDP-N-acetyl-D-mannosamine dehydrogenase (wecC) (Methanococcus vannielii (strain ATCC 35089 / DSM 1224 / JCM 13029 / OCM 148 / SB)).